Reading from the N-terminus, the 689-residue chain is Elongation factor G (689 aa).

The region spanning 8 to 282 (LNTRNIGIMA…AVVDYLPSPL (275 aa)) is the tr-type G domain. GTP is bound by residues 17–24 (AHIDAGKT), 81–85 (DTPGH), and 135–138 (NKMD).

It belongs to the TRAFAC class translation factor GTPase superfamily. Classic translation factor GTPase family. EF-G/EF-2 subfamily.

It is found in the cytoplasm. Its function is as follows. Catalyzes the GTP-dependent ribosomal translocation step during translation elongation. During this step, the ribosome changes from the pre-translocational (PRE) to the post-translocational (POST) state as the newly formed A-site-bound peptidyl-tRNA and P-site-bound deacylated tRNA move to the P and E sites, respectively. Catalyzes the coordinated movement of the two tRNA molecules, the mRNA and conformational changes in the ribosome. The chain is Elongation factor G from Mycoplasma mycoides subsp. mycoides SC (strain CCUG 32753 / NCTC 10114 / PG1).